The following is a 215-amino-acid chain: MGKVYDWFEERLEIQAIADDVTSKYVPPHVNIFYCLGGITLTCFLVQVATGFAMTFYYRPTVTEAFASVQYLMTDVNFGWLIRSVHRWSASMMVLMMILHVFRVYLTGGFKKPRELTWVTGVILAVLTVSFGVTGYSLPWDQVGYWAVKIVTGVPEAIPVIGSPLVELLRGSVSVGQSTLTRFYSLHTFVLPLLTAVFMLMHFLMIRKQGISGPL.

A helical transmembrane segment spans residues 32–52; the sequence is IFYCLGGITLTCFLVQVATGF. Heme c is bound at residue C35. The heme b site is built by H86 and H100. The next 3 membrane-spanning stretches (helical) occupy residues 90–110, 116–136, and 186–206; these read ASMMVLMMILHVFRVYLTGGF, LTWVTGVILAVLTVSFGVTGY, and LHTFVLPLLTAVFMLMHFLMI. 2 residues coordinate heme b: H187 and H202.

The protein belongs to the cytochrome b family. PetB subfamily. In terms of assembly, the 4 large subunits of the cytochrome b6-f complex are cytochrome b6, subunit IV (17 kDa polypeptide, PetD), cytochrome f and the Rieske protein, while the 4 small subunits are PetG, PetL, PetM and PetN. The complex functions as a dimer. Heme b is required as a cofactor. The cofactor is heme c.

Its subcellular location is the plastid. It is found in the chloroplast thylakoid membrane. Its function is as follows. Component of the cytochrome b6-f complex, which mediates electron transfer between photosystem II (PSII) and photosystem I (PSI), cyclic electron flow around PSI, and state transitions. In Klebsormidium bilatum (Filamentous green alga), this protein is Cytochrome b6.